Here is a 315-residue protein sequence, read N- to C-terminus: GTP cyclohydrolase MptA 1 (315 aa).

It belongs to the GTP cyclohydrolase IV family. In terms of assembly, homodimer. Requires Fe(2+) as cofactor.

The enzyme catalyses GTP + H2O = 7,8-dihydroneopterin 2',3'-cyclic phosphate + formate + diphosphate + H(+). Its pathway is cofactor biosynthesis; 5,6,7,8-tetrahydromethanopterin biosynthesis. Its function is as follows. Converts GTP to 7,8-dihydro-D-neopterin 2',3'-cyclic phosphate, the first intermediate in the biosynthesis of coenzyme methanopterin. The protein is GTP cyclohydrolase MptA 1 of Methanocella arvoryzae (strain DSM 22066 / NBRC 105507 / MRE50).